The chain runs to 868 residues: Dolichyl-phosphooligosaccharide-protein glycotransferase 3 (868 aa).

Topologically, residues 1 to 16 are cytoplasmic; that stretch reads MQNAESWFKKYWHLSV. Residues 17-36 traverse the membrane as a helical segment; that stretch reads LVIAALISVKLRILNPWNSV. Topologically, residues 37-101 are extracellular; sequence FTWTVRLGGN…IAGIIFSATS (65 aa). A DXD motif 1 motif is present at residues 45-47; the sequence is GND. Asp47 provides a ligand contact to Mn(2+). His81 is an a glycophospholipid binding site. The helical transmembrane segment at 102 to 131 threads the bilayer; that stretch reads GESLRAVLAFIPAIGGVLAILPVYLLTREV. At 132–133 the chain is on the cytoplasmic side; the sequence is FD. The helical transmembrane segment at 134-153 threads the bilayer; that stretch reads KRAAVIAAFLIAIVPGQFLQ. Residues 154-162 lie on the Extracellular side of the membrane; that stretch reads RSILGFNDH. Asp161 lines the Mn(2+) pocket. The DXD motif 2 signature appears at 161-163; it reads DHH. A glycophospholipid is bound at residue His162. Residue His163 participates in Mn(2+) binding. The helical transmembrane segment at 163–184 threads the bilayer; it reads HIWEAFWQVSALGTFLLAYNRW. The Cytoplasmic segment spans residues 185–199; that stretch reads KGHDLSHNLTARQMA. Residues 200 to 212 form a helical membrane-spanning segment; sequence YPVIAGITIGLYV. Residues 213–215 are Extracellular-facing; that stretch reads LSW. The helical transmembrane segment at 216-238 threads the bilayer; the sequence is GAGFIIAPIILAFMFFAFVLAGF. Topologically, residues 239–241 are cytoplasmic; that stretch reads VNA. Residues 242–262 form a helical membrane-spanning segment; the sequence is DRKNLSLVAVVTFAVSALIYL. Over 263–279 the chain is Extracellular; that stretch reads PFAFNYPGFSTIFYSPF. The helical transmembrane segment at 280 to 303 threads the bilayer; sequence QLLVLLGSAVIAAAFYQIEKWNDV. Residues 304–312 lie on the Cytoplasmic side of the membrane; it reads GFFERVGLG. Residues 313-330 traverse the membrane as a helical segment; the sequence is RKGMPLAVIVLTALIMGL. Topologically, residues 331–373 are extracellular; sequence FFVISPDFARNLLSVVRVVQPKGGALTIAEVYPFFFTHNGEFT. Residues 357–360 carry the TIXE motif motif; it reads TIAE. The chain crosses the membrane as a helical span at residues 374 to 396; the sequence is LTNAVLHFGALFFFGMAGILYSA. Residues 397–404 lie on the Cytoplasmic side of the membrane; sequence YRFLKRRS. The helical transmembrane segment at 405–423 threads the bilayer; the sequence is FPEMALLIWAIAMFIALWG. Over 424–427 the chain is Extracellular; sequence QNRF. Arg426 contributes to the a glycophospholipid binding site. A helical membrane pass occupies residues 428 to 452; the sequence is AYYFAAVSAVYSALALSVVFDKLHL. At 453-468 the chain is on the cytoplasmic side; that stretch reads YRALENAIGARNKLSY. Residues 469 to 494 form a helical membrane-spanning segment; that stretch reads FRVAFALLIALAAIYPTYILADAQSS. Topologically, residues 495 to 868 are extracellular; the sequence is YAGGPNKQWY…QNGEIIQLDL (374 aa). Residues 550 to 552 form an interacts with target acceptor peptide in protein substrate region; the sequence is WWD. Positions 550–554 match the WWDYG motif motif; that stretch reads WWDYG. The DKi motif motif lies at 613–622; sequence EMETGKYYAM.

It belongs to the STT3 family. Requires Mg(2+) as cofactor. It depends on Mn(2+) as a cofactor. Zn(2+) is required as a cofactor.

It localises to the cell membrane. The catalysed reaction is an archaeal dolichyl phosphooligosaccharide + [protein]-L-asparagine = an archaeal dolichyl phosphate + a glycoprotein with the oligosaccharide chain attached by N-beta-D-glycosyl linkage to a protein L-asparagine.. It participates in protein modification; protein glycosylation. Oligosaccharyl transferase (OST) that catalyzes the initial transfer of a defined glycan (a glucose-linked heptasaccharide composed of 3 Glc, 2 Man, 2 Gal and a sulfate for A.fulgidus AglB-L) from the lipid carrier dolichol-monophosphate to an asparagine residue within an Asn-X-Ser/Thr consensus motif in nascent polypeptide chains, the first step in protein N-glycosylation. The protein is Dolichyl-phosphooligosaccharide-protein glycotransferase 3 (aglB3) of Archaeoglobus fulgidus (strain ATCC 49558 / DSM 4304 / JCM 9628 / NBRC 100126 / VC-16).